A 103-amino-acid chain; its full sequence is Large ribosomal subunit protein bL21 (103 aa).

Belongs to the bacterial ribosomal protein bL21 family. In terms of assembly, part of the 50S ribosomal subunit. Contacts protein L20.

Its function is as follows. This protein binds to 23S rRNA in the presence of protein L20. In Acidithiobacillus ferrooxidans (strain ATCC 23270 / DSM 14882 / CIP 104768 / NCIMB 8455) (Ferrobacillus ferrooxidans (strain ATCC 23270)), this protein is Large ribosomal subunit protein bL21.